An 84-amino-acid chain; its full sequence is Cell division topological specificity factor (84 aa).

The protein belongs to the MinE family.

In terms of biological role, prevents the cell division inhibition by proteins MinC and MinD at internal division sites while permitting inhibition at polar sites. This ensures cell division at the proper site by restricting the formation of a division septum at the midpoint of the long axis of the cell. This Pseudomonas putida (strain W619) protein is Cell division topological specificity factor.